The primary structure comprises 341 residues: Transcription factor VIP1 (341 aa).

3 disordered regions span residues 1-33 (MEGG…HRRA), 59-106 (SLDF…PEAR), and 135-156 (SSGE…DGEM). Residues 1–162 (MEGGGRGPNQ…DGEMSSASFN (162 aa)) are necessary and sufficient for transient T-DNA transformation end expression. The span at 15–24 (EIEHMPEAPR) shows a compositional bias: basic and acidic residues. Positions 71-80 (QSQQQPQASP) are enriched in low complexity. S79 carries the phosphoserine modification. Residues 163–341 (IESILASVSG…PSYMDFTKRG (179 aa)) are involved in homomultimerization and histone H2A binding. The bZIP domain maps to 194–257 (DPKRAKRILA…SELNTENKHL (64 aa)). The tract at residues 196–217 (KRAKRILANRQSAARSKERKIR) is basic motif. The Nuclear localization signal signature appears at 198–205 (AKRILANR). Residues 222–257 (LERKVQTLQNEATTLSAQVTMLQRGTSELNTENKHL) are leucine-zipper. The span at 307 to 331 (SQQSAMNQFGNKTNQQMSTNGQPSL) shows a compositional bias: polar residues. Residues 307 to 341 (SQQSAMNQFGNKTNQQMSTNGQPSLPSYMDFTKRG) form a disordered region.

This sequence belongs to the bZIP family. Forms homomultimers. Interacts with Agrobacterium tumefaciens VirE2 and mediates its translocation to the host nucleus. Binds to VIP2. Forms a complex made of Agrobacterium VirE2, VIP1, VIP2 and single-stranded DNA (ssDNA). The interaction with KAP1 mediates its nuclear import. Binds to the H2A histone RAT5. Interacts with MPK3 and Agrobacterium virF. Forms a complex made of VIP1, VBF and Agrobacterium virE2. Interacts with SCF(VBF) E3 ubiquitin ligase complex. Binds directly to VBF. Forms heterodimers with BZIP34 and BZIP61. Post-translationally, phosphorylated by MPK3. This phosphorylation promotes nuclear localization. As to expression, mostly expressed in dividing cells, present in leaves, roots and seedlings.

It localises to the cytoplasm. The protein resides in the nucleus. Functionally, transcription activator that binds specifically to the VIP1 response elements (VREs) DNA sequence 5'-ACNGCT-3' found in some stress genes (e.g. TRX8 and MYB44), when phosphorylated/activated by MPK3. Required for Agrobacterium VirE2 nuclear import and tumorigenicity. Promotes transient expression of T-DNA in early stages by interacting with VirE2 in complex with the T-DNA and facilitating its translocation to the nucleus, and mediates stable genetic transformation by Agrobacterium by binding H2A histone. Prevents cell differentiation and shoot formation. Limits sulfate utilization efficiency (SUE) and sulfate uptake, especially in low-sulfur conditions. Plays a role in osmosensory response by binding to the 5'-AGCTGT/G-3' DNA sequence found in the promoters of the hypoosmolarity-responsive genes CYP707A1 and CYP707A3. Involved in the negative regulation of touch-induced root bending and salt-dependent root bending. In Arabidopsis thaliana (Mouse-ear cress), this protein is Transcription factor VIP1.